Consider the following 173-residue polypeptide: Protein MOTHER of FT and TFL1 (173 aa).

Residue Ala2 is modified to N-acetylalanine.

It belongs to the phosphatidylethanolamine-binding protein family. In terms of tissue distribution, expressed in gametophytes and developing seeds.

It is found in the cytoplasm. Its function is as follows. May form complexes with phosphorylated ligands by interfering with kinases and their effectors. Regulates seed germination via the abscisic acid (ABA) and gibberellic acid (GA)signaling pathways. During seed germination, MFT expression is directly repressed by ABI3 or promoted by ABI5 in the ABA signaling pathway. Involved in a negative feedback regulation of ABA signaling. Promotes embryo growth by direct repression of ABI5. In the GA signaling pathway, MFT expression is promoted by the DELLA protein RGL2 during seed germination. May regulate seed germination and fertility through the brassinosteroid (BR) signaling pathway. This chain is Protein MOTHER of FT and TFL1 (MFT), found in Arabidopsis thaliana (Mouse-ear cress).